Here is a 369-residue protein sequence, read N- to C-terminus: tRNA/tmRNA (uracil-C(5))-methyltransferase (369 aa).

Residues Q193, Y221, N226, E242, and D302 each contribute to the S-adenosyl-L-methionine site. C327 serves as the catalytic Nucleophile. Catalysis depends on E361, which acts as the Proton acceptor.

This sequence belongs to the class I-like SAM-binding methyltransferase superfamily. RNA M5U methyltransferase family. TrmA subfamily.

The enzyme catalyses uridine(54) in tRNA + S-adenosyl-L-methionine = 5-methyluridine(54) in tRNA + S-adenosyl-L-homocysteine + H(+). It carries out the reaction uridine(341) in tmRNA + S-adenosyl-L-methionine = 5-methyluridine(341) in tmRNA + S-adenosyl-L-homocysteine + H(+). Dual-specificity methyltransferase that catalyzes the formation of 5-methyluridine at position 54 (m5U54) in all tRNAs, and that of position 341 (m5U341) in tmRNA (transfer-mRNA). The sequence is that of tRNA/tmRNA (uracil-C(5))-methyltransferase from Actinobacillus succinogenes (strain ATCC 55618 / DSM 22257 / CCUG 43843 / 130Z).